A 754-amino-acid chain; its full sequence is Peptidyl-prolyl cis-trans isomerase G (754 aa).

Residues 11–176 (FFDIAINNQP…AEVRILSCGE (166 aa)) form the PPIase cyclophilin-type domain. A compositionally biased stretch (basic residues) spans 182–193 (KVKKEEKKRHKS). Residues 182-754 (KVKKEEKKRH…SPGTDEDKSG (573 aa)) form a disordered region. Residues 194–216 (SSSSSSSSSDSDSSSDSQSSSDS) show a composition bias toward low complexity. Over residues 228 to 253 (KKRKKKHRKNSRKHKKEKKKRKKSKK) the composition is skewed to basic residues. S254, S256, S257, S259, and S290 each carry phosphoserine. Residues 292 to 310 (PKADEKERKNREREREREC) are compositionally biased toward basic and acidic residues. Position 315 is a phosphoserine (S315). The segment covering 329 to 347 (SGRKIKGRGPRRYRTPSRS) has biased composition (basic residues). 2 stretches are compositionally biased toward basic and acidic residues: residues 348–368 (RSRD…EMQR) and 379–449 (RWIK…DKYK). S356 is subject to Phosphoserine. T358 carries the post-translational modification Phosphothreonine. The residue at position 386 (S386) is a Phosphoserine. A Glycyl lysine isopeptide (Lys-Gly) (interchain with G-Cter in SUMO2) cross-link involves residue K392. Residues S397, S413, and S415 each carry the phosphoserine modification. A compositionally biased stretch (basic residues) spans 450 to 462 (NKVKKRAKSKSRS). Composition is skewed to basic and acidic residues over residues 463–553 (KSKE…DITK) and 578–599 (RTHD…QEYR). Over residues 616 to 627 (SRSKDRRRRRRD) the composition is skewed to basic residues. A compositionally biased stretch (basic and acidic residues) spans 628-686 (SRSSEREESQSRNKDKYRNQESKSSHRKENSESEKRMYSKSRDHNSSNNSREKKADRDQ). Residues S687 and S690 each carry the phosphoserine modification. A compositionally biased stretch (polar residues) spans 687-698 (SPFSKIKQSSQD). Residue K693 forms a Glycyl lysine isopeptide (Lys-Gly) (interchain with G-Cter in SUMO2) linkage. 3 positions are modified to phosphoserine: S696, S744, and S745. Residues 707 to 754 (KNKEDEKIRSSVEKENQKSKGQENDHVHEKNKKFDHESSPGTDEDKSG) show a composition bias toward basic and acidic residues. Position 748 is a phosphothreonine (T748). S753 is subject to Phosphoserine.

As to quaternary structure, interacts with CLK1, PNN and with the phosphorylated C-terminal domain of RNA polymerase II. In terms of tissue distribution, ubiquitous.

The protein resides in the nucleus matrix. It is found in the nucleus speckle. It carries out the reaction [protein]-peptidylproline (omega=180) = [protein]-peptidylproline (omega=0). Inhibited by cyclosporin A (CsA). Functionally, PPIase that catalyzes the cis-trans isomerization of proline imidic peptide bonds in oligopeptides and may therefore assist protein folding. May be implicated in the folding, transport, and assembly of proteins. May play an important role in the regulation of pre-mRNA splicing. This is Peptidyl-prolyl cis-trans isomerase G (PPIG) from Homo sapiens (Human).